We begin with the raw amino-acid sequence, 590 residues long: Glutamine--tRNA ligase (590 aa).

Residues 55–65 (PEPNGYLHIGH) carry the 'HIGH' region motif. ATP-binding positions include 56–58 (EPN) and 62–68 (HIGHAKS). Positions 93 and 238 each coordinate L-glutamine. ATP is bound by residues Thr257 and 292-293 (RL). The short motif at 299-303 (ITSKR) is the 'KMSKS' region element.

It belongs to the class-I aminoacyl-tRNA synthetase family. In terms of assembly, monomer.

It localises to the cytoplasm. The catalysed reaction is tRNA(Gln) + L-glutamine + ATP = L-glutaminyl-tRNA(Gln) + AMP + diphosphate. The chain is Glutamine--tRNA ligase from Polynucleobacter asymbioticus (strain DSM 18221 / CIP 109841 / QLW-P1DMWA-1) (Polynucleobacter necessarius subsp. asymbioticus).